The primary structure comprises 49 residues: Large ribosomal subunit protein bL32 (49 aa).

Belongs to the bacterial ribosomal protein bL32 family.

The chain is Large ribosomal subunit protein bL32 from Nitratiruptor sp. (strain SB155-2).